The sequence spans 474 residues: ATP synthase subunit beta (474 aa).

Position 152-159 (152-159 (GGAGVGKT)) interacts with ATP.

Belongs to the ATPase alpha/beta chains family. As to quaternary structure, F-type ATPases have 2 components, CF(1) - the catalytic core - and CF(0) - the membrane proton channel. CF(1) has five subunits: alpha(3), beta(3), gamma(1), delta(1), epsilon(1). CF(0) has four main subunits: a(1), b(1), b'(1) and c(9-12).

It is found in the cell inner membrane. It catalyses the reaction ATP + H2O + 4 H(+)(in) = ADP + phosphate + 5 H(+)(out). Functionally, produces ATP from ADP in the presence of a proton gradient across the membrane. The catalytic sites are hosted primarily by the beta subunits. The protein is ATP synthase subunit beta of Rhodospirillum rubrum (strain ATCC 11170 / ATH 1.1.1 / DSM 467 / LMG 4362 / NCIMB 8255 / S1).